A 541-amino-acid chain; its full sequence is Probable malate:quinone oxidoreductase (541 aa).

The tract at residues 520–541 (AKPAAGAAQQAKPAKATADIAL) is disordered.

Belongs to the MQO family. FAD is required as a cofactor.

The enzyme catalyses (S)-malate + a quinone = a quinol + oxaloacetate. It functions in the pathway carbohydrate metabolism; tricarboxylic acid cycle; oxaloacetate from (S)-malate (quinone route): step 1/1. This Ralstonia nicotianae (strain ATCC BAA-1114 / GMI1000) (Ralstonia solanacearum) protein is Probable malate:quinone oxidoreductase.